A 443-amino-acid polypeptide reads, in one-letter code: Cyclin-A2-1 (443 aa).

The span at 1-10 (MHRASSKHTN) shows a compositional bias: basic residues. The tract at residues 1-61 (MHRASSKHTN…KRVARPSNKR (61 aa)) is disordered. A compositionally biased stretch (basic and acidic residues) spans 11–25 (AKKEAISTSKIRDNN).

The protein belongs to the cyclin family. Cyclin AB subfamily. Expressed in tissues with active cell division: apical root and shoot meristems, lateral root and leaf primordia, floral meristems and developing pollen.

In terms of biological role, may negatively regulate endocycles and act as a regulator of ploidy levels in endoreduplication. In Arabidopsis thaliana (Mouse-ear cress), this protein is Cyclin-A2-1 (CYCA2-1).